The chain runs to 60 residues: Large ribosomal subunit protein bL32 (60 aa).

A disordered region spans residues 1–44; the sequence is MAVQQNKKSRSARDMRRSHDALSENALSVEKTTGEVHLRHHVSP. Basic and acidic residues predominate over residues 11 to 22; the sequence is SARDMRRSHDAL.

It belongs to the bacterial ribosomal protein bL32 family.

The protein is Large ribosomal subunit protein bL32 of Pseudomonas putida (strain W619).